Reading from the N-terminus, the 117-residue chain is NADH dehydrogenase [ubiquinone] 1 beta subcomplex subunit 9 (117 aa).

The residue at position 2 (Ser2) is an N-acetylserine.

Belongs to the complex I LYR family. Complex I is composed of at least 49 different subunits. In terms of tissue distribution, expressed in roots, stems, flowers, rosette leaves, cauline leaves and siliques, with the highest expression in the stems.

It localises to the mitochondrion inner membrane. Functionally, accessory subunit of the mitochondrial membrane respiratory chain NADH dehydrogenase (Complex I), that is believed to be not involved in catalysis. Complex I functions in the transfer of electrons from NADH to the respiratory chain. The immediate electron acceptor for the enzyme is believed to be ubiquinone. Is required for correct plant growth and development. This is NADH dehydrogenase [ubiquinone] 1 beta subcomplex subunit 9 (CIB22) from Arabidopsis thaliana (Mouse-ear cress).